Consider the following 312-residue polypeptide: Heterotepalin-4 (312 aa).

The first 22 residues, 1–22 (MKSMLVVTISVWLILAPTSTWA), serve as a signal peptide directing secretion. 2 disulfides stabilise this stretch: C56-C280 and C107-C128. Residue E197 is part of the active site. The propeptide occupies 284-312 (YNQNAMFPQLIMSTYYNYMANLGDLFEEF).

It carries out the reaction Endohydrolysis of the N-glycosidic bond at one specific adenosine on the 28S rRNA.. In terms of biological role, inhibits protein synthesis in vitro. This Phytolacca heterotepala (Mexican pokeweed) protein is Heterotepalin-4.